The sequence spans 302 residues: MKIFNWVHKRLHQRVVKDGFAGNVKKSELETNDKDTQAFLKQVGLVNVDGLDGWRDGILTIGTFGFDPLKPSTHQNEYFVLESEEDDQESHGFSHSGNDDDDDDDEHYDHSVEDEELNPLMFTTFEHSFEDIGSNFDAIVQKPADVILTVDGVPLTPFEGSSEISTKPDQSANDQSKNKKGQRITLADLFQADVPDVGQLKLDSGKVQPEMEKKMNARTRSGLAFAKKLIPRVKDDSSPIKNMQRLMRRMLKRKIHPAELEVKIHKSDGQKQPSAVELISNVENDAYESVSLLPIQGAPCVH.

Residues 57-63 (GILTIGT) carry the IGT motif motif. 2 disordered regions span residues 82–115 (ESEE…VEDE) and 159–180 (EGSS…KNKK). Acidic residues predominate over residues 99-115 (DDDDDDDEHYDHSVEDE). Residues 162-175 (SEISTKPDQSANDQ) show a composition bias toward polar residues.

It belongs to the TAC family. As to expression, highly expressed in flower buds. Expressed in branch attachment sites, vegetative buds and young fruits.

Involved in the regulation of axillary shoot growth angle. Promotes horizontal shoot growth. This Prunus persica (Peach) protein is Protein TILLER ANGLE CONTROL 1.